Here is a 414-residue protein sequence, read N- to C-terminus: DNA primase small subunit PriS (414 aa).

Active-site residues include Asp-98, Asp-100, and Asp-312.

The protein belongs to the eukaryotic-type primase small subunit family. In terms of assembly, heterodimer of a small subunit (PriS) and a large subunit (PriL). It depends on Mg(2+) as a cofactor. Requires Mn(2+) as cofactor.

Its function is as follows. Catalytic subunit of DNA primase, an RNA polymerase that catalyzes the synthesis of short RNA molecules used as primers for DNA polymerase during DNA replication. The small subunit contains the primase catalytic core and has DNA synthesis activity on its own. Binding to the large subunit stabilizes and modulates the activity, increasing the rate of DNA synthesis while decreasing the length of the DNA fragments, and conferring RNA synthesis capability. The DNA polymerase activity may enable DNA primase to also catalyze primer extension after primer synthesis. May also play a role in DNA repair. The sequence is that of DNA primase small subunit PriS from Methanosarcina acetivorans (strain ATCC 35395 / DSM 2834 / JCM 12185 / C2A).